Consider the following 66-residue polypeptide: Photosystem II reaction center protein J (66 aa).

A helical transmembrane segment spans residues 36–56 (LWLVATAGGIAVIFVLGIFFY).

This sequence belongs to the PsbJ family. PSII is composed of 1 copy each of membrane proteins PsbA, PsbB, PsbC, PsbD, PsbE, PsbF, PsbH, PsbI, PsbJ, PsbK, PsbL, PsbM, PsbT, PsbX, PsbY, Psb30/Ycf12, peripheral proteins PsbO, CyanoQ (PsbQ), PsbU, PsbV and a large number of cofactors. It forms dimeric complexes.

It localises to the cellular thylakoid membrane. Its function is as follows. One of the components of the core complex of photosystem II (PSII). PSII is a light-driven water:plastoquinone oxidoreductase that uses light energy to abstract electrons from H(2)O, generating O(2) and a proton gradient subsequently used for ATP formation. It consists of a core antenna complex that captures photons, and an electron transfer chain that converts photonic excitation into a charge separation. The sequence is that of Photosystem II reaction center protein J from Prochlorococcus marinus (strain MIT 9215).